Here is a 213-residue protein sequence, read N- to C-terminus: Orotidine 5'-phosphate decarboxylase (213 aa).

Substrate-binding positions include D6, K25, 52 to 61 (DLKLADIDNT), S109, 158 to 168 (PGVGAQGAMIG), G181, and R182. K54 serves as the catalytic Proton donor.

Belongs to the OMP decarboxylase family. Type 1 subfamily. In terms of assembly, homodimer.

It carries out the reaction orotidine 5'-phosphate + H(+) = UMP + CO2. Its pathway is pyrimidine metabolism; UMP biosynthesis via de novo pathway; UMP from orotate: step 2/2. Catalyzes the decarboxylation of orotidine 5'-monophosphate (OMP) to uridine 5'-monophosphate (UMP). This is Orotidine 5'-phosphate decarboxylase from Sulfurisphaera tokodaii (strain DSM 16993 / JCM 10545 / NBRC 100140 / 7) (Sulfolobus tokodaii).